The primary structure comprises 179 residues: Large ribosomal subunit protein uL5 (179 aa).

Belongs to the universal ribosomal protein uL5 family. In terms of assembly, part of the 50S ribosomal subunit; part of the 5S rRNA/L5/L18/L25 subcomplex. Contacts the 5S rRNA and the P site tRNA. Forms a bridge to the 30S subunit in the 70S ribosome.

Its function is as follows. This is one of the proteins that bind and probably mediate the attachment of the 5S RNA into the large ribosomal subunit, where it forms part of the central protuberance. In the 70S ribosome it contacts protein S13 of the 30S subunit (bridge B1b), connecting the 2 subunits; this bridge is implicated in subunit movement. Contacts the P site tRNA; the 5S rRNA and some of its associated proteins might help stabilize positioning of ribosome-bound tRNAs. This chain is Large ribosomal subunit protein uL5, found in Salmonella agona (strain SL483).